The chain runs to 379 residues: Queuine tRNA-ribosyltransferase (379 aa).

Residue Asp-94 is the Proton acceptor of the active site. Residues 94–98 (DSGGF), Asp-148, Gln-191, and Gly-218 each bind substrate. The tract at residues 249-255 (GVGSPDS) is RNA binding. Asp-268 (nucleophile) is an active-site residue. The RNA binding; important for wobble base 34 recognition stretch occupies residues 273-277 (TRIAR). Zn(2+) is bound by residues Cys-306, Cys-308, Cys-311, and His-337.

Belongs to the queuine tRNA-ribosyltransferase family. Homodimer. Within each dimer, one monomer is responsible for RNA recognition and catalysis, while the other monomer binds to the replacement base PreQ1. The cofactor is Zn(2+).

It catalyses the reaction 7-aminomethyl-7-carbaguanine + guanosine(34) in tRNA = 7-aminomethyl-7-carbaguanosine(34) in tRNA + guanine. It functions in the pathway tRNA modification; tRNA-queuosine biosynthesis. Its function is as follows. Catalyzes the base-exchange of a guanine (G) residue with the queuine precursor 7-aminomethyl-7-deazaguanine (PreQ1) at position 34 (anticodon wobble position) in tRNAs with GU(N) anticodons (tRNA-Asp, -Asn, -His and -Tyr). Catalysis occurs through a double-displacement mechanism. The nucleophile active site attacks the C1' of nucleotide 34 to detach the guanine base from the RNA, forming a covalent enzyme-RNA intermediate. The proton acceptor active site deprotonates the incoming PreQ1, allowing a nucleophilic attack on the C1' of the ribose to form the product. After dissociation, two additional enzymatic reactions on the tRNA convert PreQ1 to queuine (Q), resulting in the hypermodified nucleoside queuosine (7-(((4,5-cis-dihydroxy-2-cyclopenten-1-yl)amino)methyl)-7-deazaguanosine). The chain is Queuine tRNA-ribosyltransferase from Bacillus anthracis (strain CDC 684 / NRRL 3495).